Here is a 432-residue protein sequence, read N- to C-terminus: Enolase (432 aa).

Q167 contributes to the (2R)-2-phosphoglycerate binding site. E209 serves as the catalytic Proton donor. D246, E289, and D316 together coordinate Mg(2+). Residues K341, R370, S371, and K392 each coordinate (2R)-2-phosphoglycerate. Catalysis depends on K341, which acts as the Proton acceptor.

The protein belongs to the enolase family. It depends on Mg(2+) as a cofactor.

The protein localises to the cytoplasm. Its subcellular location is the secreted. It is found in the cell surface. The catalysed reaction is (2R)-2-phosphoglycerate = phosphoenolpyruvate + H2O. The protein operates within carbohydrate degradation; glycolysis; pyruvate from D-glyceraldehyde 3-phosphate: step 4/5. In terms of biological role, catalyzes the reversible conversion of 2-phosphoglycerate (2-PG) into phosphoenolpyruvate (PEP). It is essential for the degradation of carbohydrates via glycolysis. In Petrotoga mobilis (strain DSM 10674 / SJ95), this protein is Enolase.